We begin with the raw amino-acid sequence, 329 residues long: Putative glucose ABC transporter permease protein TsgC13 (329 aa).

Transmembrane regions (helical) follow at residues Phe-3 to Leu-23, Gly-32 to Val-52, Trp-60 to Leu-80, Val-89 to Gly-109, Ala-139 to Leu-161, Leu-193 to Phe-213, and Leu-216 to Ala-236.

The protein belongs to the binding-protein-dependent transport system permease family. The complex is composed of two ATP-binding proteins (TsgD13), two transmembrane proteins (TsgB13 and TsgC13) and a solute-binding protein (TsgA13).

It localises to the cell membrane. Part of an ABC transporter complex involved in glucose import (Potential). Responsible for the translocation of the substrate across the membrane. The polypeptide is Putative glucose ABC transporter permease protein TsgC13 (tsgC13) (Haloferax volcanii (strain ATCC 29605 / DSM 3757 / JCM 8879 / NBRC 14742 / NCIMB 2012 / VKM B-1768 / DS2) (Halobacterium volcanii)).